Here is a 406-residue protein sequence, read N- to C-terminus: Proteasome-activating nucleotidase 1 (406 aa).

The segment covering 1–12 (MTDTVEDVELPY) has biased composition (acidic residues). The interval 1–20 (MTDTVEDVELPYDDSASQQD) is disordered. A coiled-coil region spans residues 12–70 (YDDSASQQDKLEALEEQLSTLEEENEEMRDRLLDANAENNKYQQKLERLSHENKKLKQS). Residues 192–197 (GTGKTL) and His-331 contribute to the ATP site. The segment at 385–406 (AREKLDQDSEPAAATDVSRTFA) is disordered. The tract at residues 404 to 406 (TFA) is docks into pockets in the proteasome alpha-ring to cause gate opening.

Belongs to the AAA ATPase family. Homohexamer. The hexameric complex has a two-ring architecture resembling a top hat that caps the 20S proteasome core at one or both ends. Upon ATP-binding, the C-terminus of PAN interacts with the alpha-rings of the proteasome core by binding to the intersubunit pockets.

The protein localises to the cytoplasm. ATPase which is responsible for recognizing, binding, unfolding and translocation of substrate proteins into the archaeal 20S proteasome core particle. Is essential for opening the gate of the 20S proteasome via an interaction with its C-terminus, thereby allowing substrate entry and access to the site of proteolysis. Thus, the C-termini of the proteasomal ATPase function like a 'key in a lock' to induce gate opening and therefore regulate proteolysis. Unfolding activity requires energy from ATP hydrolysis, whereas ATP binding alone promotes ATPase-20S proteasome association which triggers gate opening, and supports translocation of unfolded substrates. The chain is Proteasome-activating nucleotidase 1 from Halobacterium salinarum (strain ATCC 700922 / JCM 11081 / NRC-1) (Halobacterium halobium).